The primary structure comprises 237 residues: tRNA1(Val) (adenine(37)-N6)-methyltransferase (237 aa).

Belongs to the methyltransferase superfamily. tRNA (adenine-N(6)-)-methyltransferase family.

It is found in the cytoplasm. The catalysed reaction is adenosine(37) in tRNA1(Val) + S-adenosyl-L-methionine = N(6)-methyladenosine(37) in tRNA1(Val) + S-adenosyl-L-homocysteine + H(+). In terms of biological role, specifically methylates the adenine in position 37 of tRNA(1)(Val) (anticodon cmo5UAC). The sequence is that of tRNA1(Val) (adenine(37)-N6)-methyltransferase from Bacteroides fragilis (strain YCH46).